A 1116-amino-acid chain; its full sequence is MCLLDSCTALLLLGCWMSGSAVRISDVTLVNPDPVVSPLTAPSLLCVSSDWSSGGSVLALGQEFPRPQGSVLALGQEFPHTEPRPHPAAATVTWSSRSHAFGAFYCQIRNSTGRKIYTYKMLQEAAFLPESLTITVNQGENINISYSRRLYSPEDTVIHKNGHFEHSSPKEDISDIIHYPVTNAKAESHAGIYAIRYISAAPSSAAITRLIVRSCRAGFWGPNCTESCPRCANGGVCDDTTGECVCPPGFRGHTCDIVCGEGRFGAGCKERCVDGVCRALVFCLRDPYGCSCASGWRGLSCNDACPDGYYGAGCTQKCVCAKGRCDRFRGCVCAGRHGSRCEEADSSPVISHLRDVEINTGVELSVNCSASGRPAPLHGDITLITANRTTIAAVDTHTLNDQSTSVFRVQQVRVSSAGRWRCQVNNTHMQVEDEFTVEVKVPPRPQNPPVLQGSGPRHLLLLLNTEPYSGDGPIATTTLLYRPASAHTWSSVTAHGPLVRLDNLYPMTQYLTQVQLSRPGPGGAGQAGPAATFSTQVLELPVGVKLSAVSQTALLLSWDIAPAEQHCTYEVSCLQAGAPGTLRTFQLPSNSSAMHLSDLKPRHKYQCTVRSSCGVGQNHPSASAWTLSDQLPPPPANISIWNISDTSAVLTWAVAEGESVSRAVIRFQQVEQAQYRQQVELPVQTQQLHMRFQLLGLRPNTGYQLQLWTVNNMGESAESPPVSLMTLPQQESSALFAAHGHLLLYAILGSAGMTCCTVLLAFCIVLQLKRNTLQRRIHSILREEPAVHFSSAPPPHRRSAVVSRSLVFPALQWSDIQFQDVLGEGNFGQVLKARIRKDGLRMDAAVKRMKDYASQDDHRDFAGELEVLCRLGPHKNIIHLLGACEHRGYLYLAIEFAPHGNLLDFLRKSRVLETDPAFAIAHRTASTLSSQQLLAFSADVARGMSYLSQKQFIHRDLAARNVLVGENFVAKIADFGLSRGQEVYVKKTMGRLPVRWMAIESLNYSVYTTNSDVWSYGVLLWEVVSLGGTPYCGMTCAELYEKLPLGFRLEKPLNCDDEVYELMQQCWREKPFERPSFSQILLSLGRMLEERKTYVNTTLYEKFTYAGIDCSAEEAG.

The first 21 residues, 1–21 (MCLLDSCTALLLLGCWMSGSA), serve as a signal peptide directing secretion. The Extracellular segment spans residues 22 to 745 (VRISDVTLVN…FAAHGHLLLY (724 aa)). Cys-46 and Cys-106 form a disulfide bridge. The Ig-like C2-type 1 domain maps to 46–126 (CVSSDWSSGG…YTYKMLQEAA (81 aa)). Residues Asn-110, Asn-143, and Asn-223 are each glycosylated (N-linked (GlcNAc...) asparagine). 3 EGF-like domains span residues 214–256 (SCRA…HTCD), 258–302 (VCGE…LSCN), and 304–342 (ACPD…SRCE). 12 cysteine pairs are disulfide-bonded: Cys-215–Cys-224, Cys-228–Cys-237, Cys-231–Cys-244, Cys-246–Cys-255, Cys-259–Cys-268, Cys-272–Cys-277, Cys-283–Cys-290, Cys-292–Cys-301, Cys-305–Cys-314, Cys-318–Cys-325, Cys-320–Cys-331, and Cys-333–Cys-341. An Ig-like C2-type 2 domain is found at 348–438 (PVISHLRDVE…MQVEDEFTVE (91 aa)). N-linked (GlcNAc...) asparagine glycans are attached at residues Asn-367, Asn-387, and Asn-425. Cys-368 and Cys-422 are disulfide-bonded. 3 consecutive Fibronectin type-III domains span residues 444–538 (RPQN…TQVL), 540–633 (LPVG…QLPP), and 634–729 (PPAN…TLPQ). N-linked (GlcNAc...) asparagine glycans are attached at residues Asn-590, Asn-637, and Asn-642. A helical transmembrane segment spans residues 746 to 766 (AILGSAGMTCCTVLLAFCIVL). Over 767–1116 (QLKRNTLQRR…GIDCSAEEAG (350 aa)) the chain is Cytoplasmic. A Protein kinase domain is found at 816–1095 (IQFQDVLGEG…RMLEERKTYV (280 aa)). Residues 822-830 (LGEGNFGQV) and Lys-847 each bind ATP. Tyr-852 bears the Phosphotyrosine; by autocatalysis mark. The Proton acceptor role is filled by Asp-956. 3 positions are modified to phosphotyrosine; by autocatalysis: Tyr-984, Tyr-1094, and Tyr-1100.

Belongs to the protein kinase superfamily. Tyr protein kinase family. Tie subfamily. In terms of assembly, interacts with svep1. Autophosphorylated on tyrosine residues in response to ligand binding. Autophosphorylation occurs in trans, i.e. one subunit of the dimeric receptor phosphorylates tyrosine residues on the other subunit. Autophosphorylation occurs in a sequential manner, where Tyr-984 in the kinase activation loop is phosphorylated first, followed by autophosphorylation at additional tyrosine residues. Phosphorylation is important for interaction with scaffold proteins and effectors.

It localises to the cell membrane. The protein resides in the cell junction. The protein localises to the focal adhesion. Its subcellular location is the cytoplasm. It is found in the cytoskeleton. It catalyses the reaction L-tyrosyl-[protein] + ATP = O-phospho-L-tyrosyl-[protein] + ADP + H(+). With respect to regulation, angiopoietin binding leads to receptor dimerization and activation by autophosphorylation at Tyr-984 on the kinase activation loop. Tyrosine-protein kinase that acts as a cell-surface receptor for angiopoietins and regulates angiogenesis, endothelial cell survival, proliferation, migration, adhesion and cell spreading, reorganization of the actin cytoskeleton, but also maintenance of vascular quiescence. Can activate or inhibit angiogenesis, depending on the context. Angiopoietin signaling triggers receptor dimerization and autophosphorylation at specific tyrosine residues that then serve as binding sites for scaffold proteins and effectors. The chain is Angiopoietin-1 receptor from Danio rerio (Zebrafish).